A 1732-amino-acid polypeptide reads, in one-letter code: Serine/threonine-protein kinase MRCK alpha (1732 aa).

A Protein kinase domain is found at 77-343 (FEILKVIGRG…IEDFKKHPFF (267 aa)). ATP contacts are provided by residues 83–91 (IGRGAFGEV) and lysine 106. Aspartate 201 acts as the Proton acceptor in catalysis. A phosphoserine; by autocatalysis mark is found at serine 222 and serine 234. At threonine 240 the chain carries Phosphothreonine; by autocatalysis. One can recognise an AGC-kinase C-terminal domain in the interval 344–414 (SGIDWDNIRN…TSSCVLSDRS (71 aa)). 2 coiled-coil regions span residues 437–820 (NNLA…WEAQ) and 880–943 (LELQ…SEKG). Positions 968–1003 (ERSPSCTPASKGRRTVDSTPLSVHTPTLRKKGCPGS) are disordered. The segment at 1012–1062 (THQFFVKSFTTPTKCHQCTSLMVGLIRQGCSCEVCGFSCHITCVNKAPTTC) adopts a Phorbol-ester/DAG-type zinc-finger fold. One can recognise a PH domain in the interval 1082–1201 (GTAYEGHVRI…WVGVLSELHK (120 aa)). Residue serine 1127 is modified to Phosphoserine. In terms of domain architecture, CNH spans 1227 to 1499 (IKTTQAAAII…RPLNNEGSLN (273 aa)). Serine 1545 carries the phosphoserine modification. The CRIB domain maps to 1571–1584 (ISNPTNFNHIAHMG). A disordered region spans residues 1591-1732 (ILKDLPMNPR…ESTDRGSWDP (142 aa)). A compositionally biased stretch (polar residues) spans 1604 to 1619 (SRTVFSGSVSIPSITK). Phosphoserine occurs at positions 1611, 1613, 1629, 1651, 1664, 1669, and 1693. The span at 1625-1640 (GRSMSASSGLSARSSA) shows a compositional bias: low complexity. Over residues 1665–1674 (PSEGSLSSGG) the composition is skewed to low complexity. Positions 1697–1707 (STASNSSNLSS) are enriched in low complexity. Phosphoserine occurs at positions 1719 and 1721.

The protein belongs to the protein kinase superfamily. AGC Ser/Thr protein kinase family. DMPK subfamily. Homodimer and homotetramer via the coiled coil regions. Interacts tightly with GTP-bound but not GDP-bound CDC42. Forms a tripartite complex with MYO18A and LURAP1 with the latter acting as an adapter connecting CDC42BPA and MYO18A. LURAP1 binding results in activation of CDC42BPA by abolition of its negative autoregulation. Interacts with LURAP1. Interacts (via AGC-kinase C-terminal domain) with FAM89B/LRAP25 (via LRR repeat). Forms a tripartite complex with FAM89B/LRAP25 and LIMK1. Mg(2+) is required as a cofactor. Proteolytically cleaved by caspases upon apoptosis induction. The cleavage at Asp-478 by CASP3 increases its kinase activity (in vitro). Abundant in the heart, brain, skeletal muscle, kidney, and pancreas, with little or no expression in the lung and liver.

It localises to the cytoplasm. Its subcellular location is the cell projection. The protein localises to the lamellipodium. The enzyme catalyses L-seryl-[protein] + ATP = O-phospho-L-seryl-[protein] + ADP + H(+). It catalyses the reaction L-threonyl-[protein] + ATP = O-phospho-L-threonyl-[protein] + ADP + H(+). Maintained in an inactive, closed conformation by an interaction between the kinase domain and the negative autoregulatory C-terminal coiled-coil region. Agonist binding to the phorbol ester binding site disrupts this, releasing the kinase domain to allow N-terminus-mediated dimerization and kinase activation by transautophosphorylation. Inhibited by chelerythrine chloride. In terms of biological role, serine/threonine-protein kinase which is an important downstream effector of CDC42 and plays a role in the regulation of cytoskeleton reorganization and cell migration. Regulates actin cytoskeletal reorganization via phosphorylation of PPP1R12C and MYL9/MLC2. In concert with MYO18A and LURAP1, is involved in modulating lamellar actomyosin retrograde flow that is crucial to cell protrusion and migration. Phosphorylates: PPP1R12A, LIMK1 and LIMK2. May play a role in TFRC-mediated iron uptake. In concert with FAM89B/LRAP25 mediates the targeting of LIMK1 to the lamellipodium resulting in its activation and subsequent phosphorylation of CFL1 which is important for lamellipodial F-actin regulation. Triggers the formation of an extrusion apical actin ring required for epithelial extrusion of apoptotic cells. The protein is Serine/threonine-protein kinase MRCK alpha of Homo sapiens (Human).